The following is a 339-amino-acid chain: Glycerol-3-phosphate dehydrogenase [NAD(P)+] (339 aa).

Residues Ser-13, Trp-14, and Lys-108 each coordinate NADPH. Lys-108, Gly-139, and Ser-141 together coordinate sn-glycerol 3-phosphate. Ala-143 contributes to the NADPH binding site. Residues Lys-194, Asp-247, Ser-257, Arg-258, and Asn-259 each coordinate sn-glycerol 3-phosphate. The Proton acceptor role is filled by Lys-194. Residue Arg-258 participates in NADPH binding. 2 residues coordinate NADPH: Val-282 and Glu-284.

It belongs to the NAD-dependent glycerol-3-phosphate dehydrogenase family.

The protein resides in the cytoplasm. The catalysed reaction is sn-glycerol 3-phosphate + NAD(+) = dihydroxyacetone phosphate + NADH + H(+). It catalyses the reaction sn-glycerol 3-phosphate + NADP(+) = dihydroxyacetone phosphate + NADPH + H(+). It functions in the pathway membrane lipid metabolism; glycerophospholipid metabolism. Its function is as follows. Catalyzes the reduction of the glycolytic intermediate dihydroxyacetone phosphate (DHAP) to sn-glycerol 3-phosphate (G3P), the key precursor for phospholipid synthesis. In Streptococcus equi subsp. zooepidemicus (strain H70), this protein is Glycerol-3-phosphate dehydrogenase [NAD(P)+].